A 351-amino-acid chain; its full sequence is Phosphoribosylformylglycinamidine cyclo-ligase (351 aa).

The protein belongs to the AIR synthase family.

The protein localises to the cytoplasm. The catalysed reaction is 2-formamido-N(1)-(5-O-phospho-beta-D-ribosyl)acetamidine + ATP = 5-amino-1-(5-phospho-beta-D-ribosyl)imidazole + ADP + phosphate + H(+). It functions in the pathway purine metabolism; IMP biosynthesis via de novo pathway; 5-amino-1-(5-phospho-D-ribosyl)imidazole from N(2)-formyl-N(1)-(5-phospho-D-ribosyl)glycinamide: step 2/2. This is Phosphoribosylformylglycinamidine cyclo-ligase from Burkholderia multivorans (strain ATCC 17616 / 249).